The chain runs to 212 residues: Lipid A acyltransferase PagP (212 aa).

An N-terminal signal peptide occupies residues 1 to 24; the sequence is MYLKRTLITLSLITLPIVPFLSYA. A compositionally biased stretch (polar residues) spans 36–47; sequence NLAPVTVDSSDP. Residues 36 to 56 are disordered; sequence NLAPVTVDSSDPVSDKQGESW. Residues histidine 84, aspartate 127, and serine 128 contribute to the active site.

Belongs to the lipid A palmitoyltransferase family. Homodimer.

Its subcellular location is the cell outer membrane. It catalyses the reaction a lipid A + a 1,2-diacyl-sn-glycero-3-phosphocholine = a hepta-acyl lipid A + a 2-acyl-sn-glycero-3-phosphocholine. The catalysed reaction is a lipid IVA + a 1,2-diacyl-sn-glycero-3-phosphocholine = a lipid IVB + a 2-acyl-sn-glycero-3-phosphocholine. It carries out the reaction a lipid IIA + a 1,2-diacyl-sn-glycero-3-phosphocholine = a lipid IIB + a 2-acyl-sn-glycero-3-phosphocholine. In terms of biological role, transfers a fatty acid residue from the sn-1 position of a phospholipid to the N-linked hydroxyfatty acid chain on the proximal unit of lipid A or its precursors. This chain is Lipid A acyltransferase PagP, found in Pectobacterium carotovorum subsp. carotovorum (strain PC1).